The following is a 392-amino-acid chain: Phosphoglycerate kinase (392 aa).

Substrate is bound by residues 21–23, Arg-36, 59–62, Arg-113, and Arg-146; these read DFN and HLGR. ATP contacts are provided by residues Lys-197, Glu-319, and 345-348; that span reads GGDT.

This sequence belongs to the phosphoglycerate kinase family. As to quaternary structure, monomer.

It is found in the cytoplasm. The catalysed reaction is (2R)-3-phosphoglycerate + ATP = (2R)-3-phospho-glyceroyl phosphate + ADP. The protein operates within carbohydrate degradation; glycolysis; pyruvate from D-glyceraldehyde 3-phosphate: step 2/5. This chain is Phosphoglycerate kinase, found in Francisella tularensis subsp. tularensis (strain FSC 198).